Consider the following 742-residue polypeptide: F-box only protein 30 (742 aa).

The TRAF-type zinc finger occupies 49–108 (EHRLLCPFERVPCLNSNFGCPFTLARNKVAEHLEMCPASVVCCTMEWNRWPVSYSDRKSY). Residues 214-242 (SLQGTTNEMDEESNRESSQDRNAKDQDHL) form a disordered region. A compositionally biased stretch (basic and acidic residues) spans 225–242 (ESNRESSQDRNAKDQDHL). At serine 379 the chain carries Phosphoserine. The 47-residue stretch at 607–653 (SDHLSSLPFEVLQHIAGFLDGFSLCQLACVSRLMRDICGSLLQSRGM) folds into the F-box domain.

Part of a SCF (SKP1-cullin-F-box) protein ligase complex. Interacts with SKP1, CUL1 and RBX1/ROC1. In terms of processing, auto-ubiquitinated. May be neddylated. Neddylation may be required for E3 ligase activity.

The protein operates within protein modification; protein ubiquitination. Substrate-recognition component of the SCF (SKP1-CUL1-F-box protein)-type E3 ubiquitin ligase complex. Required for muscle atrophy following denervation. The polypeptide is F-box only protein 30 (Fbxo30) (Rattus norvegicus (Rat)).